A 115-amino-acid chain; its full sequence is Cytochrome c (115 aa).

Residues C26, C29, H30, and M91 each contribute to the heme c site.

The protein belongs to the cytochrome c family. In terms of processing, binds 1 heme c group covalently per subunit.

The protein localises to the mitochondrion intermembrane space. Functionally, electron carrier protein. The oxidized form of the cytochrome c heme group can accept an electron from the heme group of the cytochrome c1 subunit of cytochrome reductase. Cytochrome c then transfers this electron to the cytochrome oxidase complex, the final protein carrier in the mitochondrial electron-transport chain. This Theileria parva (East coast fever infection agent) protein is Cytochrome c.